A 298-amino-acid chain; its full sequence is Serpentine receptor class delta-34 (298 aa).

Helical transmembrane passes span 10–30 (SSIM…FTQV), 54–74 (ACFF…FAIP), 99–119 (MILL…VITY), 158–178 (LATN…IVFI), 207–227 (LTIQ…AHLI), and 242–262 (VLYM…IVTI).

It belongs to the nematode receptor-like protein srd family.

It is found in the membrane. In Caenorhabditis elegans, this protein is Serpentine receptor class delta-34 (srd-34).